The chain runs to 175 residues: Peptide deformylase (175 aa).

Residues Cys99 and His141 each contribute to the Fe cation site. The active site involves Glu142. Residue His145 participates in Fe cation binding.

The protein belongs to the polypeptide deformylase family. The cofactor is Fe(2+).

It carries out the reaction N-terminal N-formyl-L-methionyl-[peptide] + H2O = N-terminal L-methionyl-[peptide] + formate. Removes the formyl group from the N-terminal Met of newly synthesized proteins. Requires at least a dipeptide for an efficient rate of reaction. N-terminal L-methionine is a prerequisite for activity but the enzyme has broad specificity at other positions. In Rickettsia canadensis (strain McKiel), this protein is Peptide deformylase.